The primary structure comprises 141 residues: Nucleoside diphosphate kinase (141 aa).

Positions 11, 59, 87, 93, 104, and 114 each coordinate ATP. Histidine 117 serves as the catalytic Pros-phosphohistidine intermediate.

It belongs to the NDK family. Homotetramer. Mg(2+) serves as cofactor.

The protein resides in the cytoplasm. It catalyses the reaction a 2'-deoxyribonucleoside 5'-diphosphate + ATP = a 2'-deoxyribonucleoside 5'-triphosphate + ADP. It carries out the reaction a ribonucleoside 5'-diphosphate + ATP = a ribonucleoside 5'-triphosphate + ADP. Major role in the synthesis of nucleoside triphosphates other than ATP. The ATP gamma phosphate is transferred to the NDP beta phosphate via a ping-pong mechanism, using a phosphorylated active-site intermediate. The protein is Nucleoside diphosphate kinase of Serratia proteamaculans (strain 568).